A 258-amino-acid chain; its full sequence is Insulin-like growth factor-binding protein 4 (258 aa).

Residues 1-21 (MLSLCLMAALLLAAGPGPSLG) form the signal peptide. Residues 23-103 (EAIHCPPCSE…VHGQGVCMEL (81 aa)) form the IGFBP N-terminal domain. 6 cysteine pairs are disulfide-bonded: Cys-27-Cys-53, Cys-30-Cys-55, Cys-38-Cys-56, Cys-44-Cys-59, Cys-67-Cys-80, and Cys-74-Cys-100. Asn-125 carries an N-linked (GlcNAc...) asparagine glycan. 4 cysteine pairs are disulfide-bonded: Cys-131/Cys-138, Cys-174/Cys-204, Cys-215/Cys-226, and Cys-228/Cys-249. Residues 171–249 (QGSCQSELHR…GLEPKGELDC (79 aa)) enclose the Thyroglobulin type-1 domain. Ser-255 carries the post-translational modification Phosphoserine.

In terms of assembly, binds IGF2 more than IGF1.

It is found in the secreted. IGF-binding proteins prolong the half-life of the IGFs and have been shown to either inhibit or stimulate the growth promoting effects of the IGFs on cell culture. They alter the interaction of IGFs with their cell surface receptors. The sequence is that of Insulin-like growth factor-binding protein 4 (IGFBP4) from Bos taurus (Bovine).